Here is a 356-residue protein sequence, read N- to C-terminus: DNA-directed RNA polymerase subunit alpha (356 aa).

Positions Met1–Leu259 are alpha N-terminal domain (alpha-NTD). The tract at residues Phe277–Asp356 is alpha C-terminal domain (alpha-CTD).

Belongs to the RNA polymerase alpha chain family. As to quaternary structure, in plastids the minimal PEP RNA polymerase catalytic core is composed of four subunits: alpha, beta, beta', and beta''. When a (nuclear-encoded) sigma factor is associated with the core the holoenzyme is formed, which can initiate transcription.

The protein localises to the plastid. The protein resides in the chloroplast. The catalysed reaction is RNA(n) + a ribonucleoside 5'-triphosphate = RNA(n+1) + diphosphate. Its function is as follows. DNA-dependent RNA polymerase catalyzes the transcription of DNA into RNA using the four ribonucleoside triphosphates as substrates. This chain is DNA-directed RNA polymerase subunit alpha, found in Ostreococcus tauri.